Reading from the N-terminus, the 61-residue chain is Beta-defensin 13 (61 aa).

A signal peptide spans 1–21; that stretch reads MRLLYLLFAAVMLLFLQAVPA. Residues Ser24, Arg40, His44, Asn51, Asn53, Gly54, His58, and Lys61 each contribute to the a 1,2-diacyl-sn-glycero-3-phosphate site. 3 disulfide bridges follow: Cys31/Cys59, Cys38/Cys52, and Cys42/Cys60.

The protein belongs to the beta-defensin family. In terms of assembly, monomeric. Forms multimeric, probably including tetrameric, complexes in the presence of phospholipid phosphatidic acid.

It is found in the secreted. Exhibits antimicrobial activity against fungi. Antimicrobial activity in a pH-dependent manner against the yeast C.albicans; activity is salt tolerant and retains antifungal activity in NaCl concentrations of 100mM. Permeabilizes C.albicans cell membranes via targeting plasma membrane phospholipid phosphatidic acid. This chain is Beta-defensin 13, found in Crocodylus porosus (Saltwater crocodile).